The following is a 290-amino-acid chain: 33 kDa chaperonin (290 aa).

Disulfide bonds link cysteine 235/cysteine 237 and cysteine 268/cysteine 271.

The protein belongs to the HSP33 family. Under oxidizing conditions two disulfide bonds are formed involving the reactive cysteines. Under reducing conditions zinc is bound to the reactive cysteines and the protein is inactive.

It localises to the cytoplasm. Redox regulated molecular chaperone. Protects both thermally unfolding and oxidatively damaged proteins from irreversible aggregation. Plays an important role in the bacterial defense system toward oxidative stress. In Streptococcus pyogenes serotype M18 (strain MGAS8232), this protein is 33 kDa chaperonin.